The following is a 146-amino-acid chain: Hemoglobin subunit beta (146 aa).

One can recognise a Globin domain in the interval 2–146 (EWTDFERATI…VVNSLGRQYH (145 aa)). 2 residues coordinate heme b: His-63 and His-92.

This sequence belongs to the globin family. In terms of assembly, heterotetramer of two alpha chains and two beta chains. Can form polymers. In terms of tissue distribution, red blood cells.

Involved in oxygen transport from gills to the various peripheral tissues. This Chelidonichthys kumu (Bluefin gurnard) protein is Hemoglobin subunit beta (hbb).